The primary structure comprises 857 residues: DNA mismatch repair protein MutS (857 aa).

613 to 620 serves as a coordination point for ATP; sequence GPNMGGKS. The segment at 797-820 is disordered; sequence TSLPHEQPAAHKAKDAPQVPHQSD.

This sequence belongs to the DNA mismatch repair MutS family.

Functionally, this protein is involved in the repair of mismatches in DNA. It is possible that it carries out the mismatch recognition step. This protein has a weak ATPase activity. In Pseudomonas putida (strain ATCC 700007 / DSM 6899 / JCM 31910 / BCRC 17059 / LMG 24140 / F1), this protein is DNA mismatch repair protein MutS.